Consider the following 322-residue polypeptide: Fructose-1,6-bisphosphatase class 1 1 (322 aa).

Mg(2+) is bound by residues Glu84, Asp103, Leu105, and Asp106. Substrate is bound by residues 106 to 109 (DGSS), Asn198, and Lys264. Glu270 contacts Mg(2+).

It belongs to the FBPase class 1 family. Homotetramer. Mg(2+) is required as a cofactor.

Its subcellular location is the cytoplasm. It catalyses the reaction beta-D-fructose 1,6-bisphosphate + H2O = beta-D-fructose 6-phosphate + phosphate. It participates in carbohydrate biosynthesis; gluconeogenesis. This is Fructose-1,6-bisphosphatase class 1 1 from Pseudoalteromonas translucida (strain TAC 125).